Reading from the N-terminus, the 370-residue chain is MTPETLPIDQYEQQLAEKAARLRQMMLAFQAPEAQIFRSQPAHYRMRAEFRIWHDEDDLYHIMFDPQTKARIRIDHFMPGSPLINALMAEMMTAIRPEPLLRAKLFQIDYLTTQSGEAVVTLIYHRPLDDAWRECAAGLRDALRARGYHIQFIGRANKTKIYLDRDYVDERLTVAGRTLIYQQIENSFTQPNAGINVHMLEWALAATEGAQGDLLELYCGNGNFSLALARHFDRVLATEIAKLSVEAAHYNIAANHIDNVQIVRMSAEEFTQAMRKEREFTRLKEIDLQSYRCETIFVDPPRSGLDEATVSMVQAYPQILYISCNPDSLCRNLSTLSTTHTIERLALFDQFPYTHHMECGVLLVRKATAV.

Positions 190, 218, 223, 239, and 299 each coordinate S-adenosyl-L-methionine. Cysteine 324 (nucleophile) is an active-site residue. The Proton acceptor role is filled by glutamate 358.

This sequence belongs to the class I-like SAM-binding methyltransferase superfamily. RNA M5U methyltransferase family. TrmA subfamily.

It catalyses the reaction uridine(54) in tRNA + S-adenosyl-L-methionine = 5-methyluridine(54) in tRNA + S-adenosyl-L-homocysteine + H(+). The catalysed reaction is uridine(341) in tmRNA + S-adenosyl-L-methionine = 5-methyluridine(341) in tmRNA + S-adenosyl-L-homocysteine + H(+). Dual-specificity methyltransferase that catalyzes the formation of 5-methyluridine at position 54 (m5U54) in all tRNAs, and that of position 341 (m5U341) in tmRNA (transfer-mRNA). This Sodalis glossinidius (strain morsitans) protein is tRNA/tmRNA (uracil-C(5))-methyltransferase.